We begin with the raw amino-acid sequence, 140 residues long: Nucleoside diphosphate kinase (140 aa).

ATP-binding residues include Lys11, Phe59, Arg87, Thr93, Arg104, and Asn114. Catalysis depends on His117, which acts as the Pros-phosphohistidine intermediate.

Belongs to the NDK family. In terms of assembly, homotetramer. Requires Mg(2+) as cofactor.

The protein resides in the cytoplasm. It catalyses the reaction a 2'-deoxyribonucleoside 5'-diphosphate + ATP = a 2'-deoxyribonucleoside 5'-triphosphate + ADP. The enzyme catalyses a ribonucleoside 5'-diphosphate + ATP = a ribonucleoside 5'-triphosphate + ADP. Its function is as follows. Major role in the synthesis of nucleoside triphosphates other than ATP. The ATP gamma phosphate is transferred to the NDP beta phosphate via a ping-pong mechanism, using a phosphorylated active-site intermediate. This Rickettsia canadensis (strain McKiel) protein is Nucleoside diphosphate kinase.